The following is a 316-amino-acid chain: MIFIPIIILIYLVSIAASDKSPKIKKNPRNVVAVADFPFGGDTQVKGNVVFSAKEGKHVNVHIDMTGLPKDEGPFFYHIHERSVPGNGNCEAVGLHFNPYNASPVCDEQKNDAYCQVGDLSGKHGCINTTCFELKYSDPYLSLNRKSKSYIIGKSVVFHYPNLTKIACADIEEANELRLQSLIDEYTQTDDAIQLKELNTPLETDYKFDEVEALSSEIYHSDTDSDPPQQELISTEKLYNKTDNVYSPEETRPSDQNKKSHRHSLLPLAKWKKNSPKNYSNISIHGISSDCLNDGMMVTGSVFGSLVLGIAAGIFV.

Positions 1-18 (MIFIPIIILIYLVSIAAS) are cleaved as a signal peptide. Residues His78, His80, and His96 each contribute to the Cu cation site. Zn(2+) contacts are provided by His96 and Asp119. Asn128 carries an N-linked (GlcNAc...) asparagine glycan. His159 lines the Cu cation pocket. Asn162 and Asn240 each carry an N-linked (GlcNAc...) asparagine glycan. The disordered stretch occupies residues 243 to 263 (DNVYSPEETRPSDQNKKSHRH). The segment covering 249 to 258 (EETRPSDQNK) has biased composition (basic and acidic residues). N-linked (GlcNAc...) asparagine glycans are attached at residues Asn278 and Asn281. Ser288 is lipidated: GPI-anchor amidated serine. Residues 289 to 316 (SDCLNDGMMVTGSVFGSLVLGIAAGIFV) constitute a propeptide, removed in mature form.

The protein belongs to the Cu-Zn superoxide dismutase family. Cu cation is required as a cofactor. Zn(2+) serves as cofactor. In terms of processing, the GPI-anchor is attached to the protein in the endoplasmic reticulum and serves to target the protein to the cell surface. There, the glucosamine-inositol phospholipid moiety is cleaved off and the GPI-modified mannoprotein is covalently attached via its lipidless GPI glycan remnant to the 1,6-beta-glucan of the outer cell wall layer.

The protein resides in the secreted. It is found in the cell wall. The protein localises to the membrane. It catalyses the reaction 2 superoxide + 2 H(+) = H2O2 + O2. In terms of biological role, superoxide dismutases serve to convert damaging superoxide radicals, a key form of ROS, to less damaging hydrogen peroxide that can be converted into water by catalase action. May be involved protection against extracellular stress. The chain is Cell surface superoxide dismutase [Cu-Zn] 6 (SOD6) from Candida albicans (strain SC5314 / ATCC MYA-2876) (Yeast).